The chain runs to 706 residues: Polyribonucleotide nucleotidyltransferase (706 aa).

Mg(2+) contacts are provided by Asp487 and Asp493. The region spanning 553–612 (PRLFTMKISQDKIRDVIGKGGETIRSITAETGTEINIAEDGTITIAATTQEAGDAAKKRI) is the KH domain. The region spanning 622 to 692 (GKVYEGTVVK…DRGRVRLSIK (71 aa)) is the S1 motif domain.

It belongs to the polyribonucleotide nucleotidyltransferase family. Mg(2+) serves as cofactor.

It is found in the cytoplasm. It catalyses the reaction RNA(n+1) + phosphate = RNA(n) + a ribonucleoside 5'-diphosphate. Functionally, involved in mRNA degradation. Catalyzes the phosphorolysis of single-stranded polyribonucleotides processively in the 3'- to 5'-direction. In Neisseria gonorrhoeae (strain ATCC 700825 / FA 1090), this protein is Polyribonucleotide nucleotidyltransferase.